Reading from the N-terminus, the 368-residue chain is Alanine racemase (368 aa).

Catalysis depends on K35, which acts as the Proton acceptor; specific for D-alanine. K35 bears the N6-(pyridoxal phosphate)lysine mark. R130 provides a ligand contact to substrate. Residue Y253 is the Proton acceptor; specific for L-alanine of the active site. M305 contacts substrate.

Belongs to the alanine racemase family. It depends on pyridoxal 5'-phosphate as a cofactor.

The enzyme catalyses L-alanine = D-alanine. The protein operates within amino-acid biosynthesis; D-alanine biosynthesis; D-alanine from L-alanine: step 1/1. Its function is as follows. Catalyzes the interconversion of L-alanine and D-alanine. May also act on other amino acids. The polypeptide is Alanine racemase (alr) (Cupriavidus metallidurans (strain ATCC 43123 / DSM 2839 / NBRC 102507 / CH34) (Ralstonia metallidurans)).